Here is an 80-residue protein sequence, read N- to C-terminus: Protein OPG051 (80 aa).

This sequence belongs to the orthopoxvirus OPG051 family.

This Vaccinia virus (strain Western Reserve) (VACV) protein is Protein OPG051 (OPG051).